Reading from the N-terminus, the 44-residue chain is MVNNTSNQPTSYPIFTVRWLAVHTLAVPTVFFVGAIAAMQFIQR.

Residues 19 to 35 (WLAVHTLAVPTVFFVGA) form a helical membrane-spanning segment. A heme-binding site is contributed by H23.

It belongs to the PsbE/PsbF family. Heterodimer of an alpha subunit and a beta subunit. PSII is composed of 1 copy each of membrane proteins PsbA, PsbB, PsbC, PsbD, PsbE, PsbF, PsbH, PsbI, PsbJ, PsbK, PsbL, PsbM, PsbT, PsbX, PsbY, PsbZ, Psb30/Ycf12, peripheral proteins PsbO, CyanoQ (PsbQ), PsbU, PsbV and a large number of cofactors. It forms dimeric complexes. The cofactor is heme b.

It is found in the cellular thylakoid membrane. This b-type cytochrome is tightly associated with the reaction center of photosystem II (PSII). PSII is a light-driven water:plastoquinone oxidoreductase that uses light energy to abstract electrons from H(2)O, generating O(2) and a proton gradient subsequently used for ATP formation. It consists of a core antenna complex that captures photons, and an electron transfer chain that converts photonic excitation into a charge separation. The polypeptide is Cytochrome b559 subunit beta (Crocosphaera subtropica (strain ATCC 51142 / BH68) (Cyanothece sp. (strain ATCC 51142))).